The sequence spans 688 residues: MSKDFLLEIGLEEMPAKYVTSSVLQLEKRVTDWLKDNQIEFKEIKTYSTPRRLTVLVEEMAEEQANRVEEAKGPAKKIALDDEGNWSKAALGFAKSQKVAPEDLTFREIKGVEYIYIKKEVIGEKTTALLPSLEKVVTSMTFPVSMHWGSNDLRYIRPIKWLIAMFGEEIIPFEITGVSTSNTSRGHRFLGKTATINQPSDYPNALLEQFVVVNASERKQAIVEQLRELETMENWQIREDDDLLEEVTNLVEYPTVLAGNFEKEYLELPEEVLITTMKEHQRYFPVFSQEGELLPHFVTVRNGNHENLDTVARGNEKVLRARLSDADFFYQEDLKITIDEAVAKLQNIVFHEKLGTLTEKMKRVQKVALMLADYLNWQEEDKQDIIRLTNIYKFDLVTNIVGEFPELQGLMGEKYALLQGEKPAIATAIREHYLPSSAEGDLPQTDLGSLIAIADKLETLIGFFCVNIAPTGSADPFGLRRSAFGAVRIIQANGWDIPMLEVVSRIVDMERAEGATELPSSDVIKEVQTFLKNRLRVILQGHHIRHDIIDAVIGGDPNMIPQLIDRAQILNKHADAEWFRPTIEALTRVVNISKKYEDGVEVDPSLFENEYEQALFDKLEKLKFDFAGLKIVDRLKAFADLRTTIDAYFDNTLVMTDNDELKNNRLALLFELASFIKEFAQMDEINVK.

Belongs to the class-II aminoacyl-tRNA synthetase family. As to quaternary structure, tetramer of two alpha and two beta subunits.

It localises to the cytoplasm. It catalyses the reaction tRNA(Gly) + glycine + ATP = glycyl-tRNA(Gly) + AMP + diphosphate. This is Glycine--tRNA ligase beta subunit from Listeria monocytogenes serotype 4b (strain CLIP80459).